The sequence spans 351 residues: Prohormone-2 (351 aa).

An N-terminal signal peptide occupies residues 1-21 (MMCDWVWLLLTLCSLLMIVQS). 2 consecutive propeptides follow at residues 22-177 (LPTN…QTQV) and 192-319 (ELDI…MISR). Over residues 51-69 (GNQQNHQPENNPSSSYSST) the composition is skewed to polar residues. Disordered stretches follow at residues 51–71 (GNQQ…STAE) and 136–176 (NEDR…VQTQ). Over residues 136–145 (NEDRRKRSEK) the composition is skewed to basic and acidic residues. Residues 158–176 (PSTTSFQSPTSTQQSVQTQ) show a composition bias toward low complexity.

Its subcellular location is the secreted. In Apis mellifera (Honeybee), this protein is Prohormone-2.